An 85-amino-acid chain; its full sequence is UPF0386 protein HNE_3437 (85 aa).

Belongs to the UPF0386 family.

The protein is UPF0386 protein HNE_3437 of Hyphomonas neptunium (strain ATCC 15444).